We begin with the raw amino-acid sequence, 151 residues long: Ubiquitin-conjugating enzyme E2-17 kDa (151 aa).

The UBC core domain occupies 4 to 150; sequence PARRRLMRDF…VKACVEQSFI (147 aa). C88 acts as the Glycyl thioester intermediate in catalysis.

This sequence belongs to the ubiquitin-conjugating enzyme family.

It localises to the nucleus. The catalysed reaction is S-ubiquitinyl-[E1 ubiquitin-activating enzyme]-L-cysteine + [E2 ubiquitin-conjugating enzyme]-L-cysteine = [E1 ubiquitin-activating enzyme]-L-cysteine + S-ubiquitinyl-[E2 ubiquitin-conjugating enzyme]-L-cysteine.. Its pathway is protein modification; protein ubiquitination. In terms of biological role, E2 ubiquitin-conjugating enzyme that accepts ubiquitin from the ubiquitin-activating enzyme E1 and transfers it to a E3 ubiquitin-protein ligase. Required for postreplication repair of UV-damaged DNA. Involved in the negative regulation of the Ras/MAPK signaling pathway in the wing by acting with the putative E3 ligases poe, Kcmf1 and Ufd4 to mediate the ubiquitination and proteasomal degradation of rl/MAPK. Required for in mitophagy. This Drosophila melanogaster (Fruit fly) protein is Ubiquitin-conjugating enzyme E2-17 kDa.